The chain runs to 1200 residues: Ice nucleation protein (1200 aa).

Positions Ala-176–Ile-1151 are octapeptide periodicity.

Belongs to the bacterial ice nucleation protein family.

The protein resides in the cell outer membrane. Ice nucleation proteins enable bacteria to nucleate crystallization in supercooled water. In Pseudomonas syringae pv. syringae, this protein is Ice nucleation protein (inaZ).